The sequence spans 337 residues: Cytoskeleton protein RodZ (337 aa).

Over 1–111 (MNTEATHDQN…LGKRRKKRDG (111 aa)) the chain is Cytoplasmic. An HTH cro/C1-type domain is found at 19 to 71 (LRNAREQLGLSQQAVAERLCLKVSTVRDIEEDKAPADLASTFLRGYIRSYARL). The H-T-H motif DNA-binding region spans 30–49 (QQAVAERLCLKVSTVRDIEE). Residues 112–132 (WLMTFTWLVLFVVIGLSGAWW) form a helical; Signal-anchor for type II membrane protein membrane-spanning segment. Topologically, residues 133–337 (WQDHKAQQEE…TLNAEQSPAQ (205 aa)) are periplasmic. A compositionally biased stretch (polar residues) spans 145-167 (TMADQSSAELSSNSEQGQSVPLN). Positions 145-218 (TMADQSSAEL…AVVSPSQANV (74 aa)) are disordered. Low complexity predominate over residues 168-207 (TSTTTDPATTSTPPASVDTTATNTQTPAVTAPAPAVDPQQ). The segment covering 208–218 (NAVVSPSQANV) has biased composition (polar residues).

This sequence belongs to the RodZ family.

The protein localises to the cell inner membrane. Cytoskeletal protein that is involved in cell-shape control through regulation of the length of the long axis. The sequence is that of Cytoskeleton protein RodZ from Shigella dysenteriae serotype 1 (strain Sd197).